The sequence spans 337 residues: uncharacterized protein (337 aa).

The disordered stretch occupies residues 291-314 (NKTRQCSNTKTTTKSTMTPINNGF). Residues 299–308 (TKTTTKSTMT) are compositionally biased toward low complexity.

This is an uncharacterized protein from Acanthamoeba polyphaga mimivirus (APMV).